The following is a 62-amino-acid chain: Alkaline proteinase (62 aa).

Residues 1-62 (GSTSYIYDTS…FAPGTSVLSS (62 aa)) enclose the Peptidase S8 domain. The active-site Charge relay system is Asp-21.

It is found in the secreted. Inhibited by phenylmethanesulfonyl fluoride (PMSF) and chymostatin (CST), but not by Bowman-Birk type trypsin-chymotrypsin inhibitor (BBI). In terms of biological role, serine protease. May be involved in the invasion of grains and hydrolysis of grain proteins. This chain is Alkaline proteinase, found in Fusarium culmorum.